Here is a 153-residue protein sequence, read N- to C-terminus: Neuromedin-S (153 aa).

A signal peptide spans 1–26 (MKHPLPHYSPILFIYCFCMLQIPSSG). 3 consecutive propeptides follow at residues 27-69 (ASPP…VYKR), 70-105 (FLFH…ASRR), and 106-108 (MKR). Asn-144 carries the post-translational modification Asparagine amide. A propeptide spanning residues 147–153 (YTDNNFQ) is cleaved from the precursor.

This sequence belongs to the NmU family.

Its subcellular location is the secreted. Its function is as follows. Implicated in the regulation of circadian rhythms through autocrine and/or paracrine actions. The chain is Neuromedin-S (Nms) from Mus musculus (Mouse).